The primary structure comprises 271 residues: Acyl-[acyl-carrier-protein]--UDP-N-acetylglucosamine O-acyltransferase (271 aa).

The protein belongs to the transferase hexapeptide repeat family. LpxA subfamily. Homotrimer.

It is found in the cytoplasm. It carries out the reaction a (3R)-hydroxyacyl-[ACP] + UDP-N-acetyl-alpha-D-glucosamine = a UDP-3-O-[(3R)-3-hydroxyacyl]-N-acetyl-alpha-D-glucosamine + holo-[ACP]. It participates in glycolipid biosynthesis; lipid IV(A) biosynthesis; lipid IV(A) from (3R)-3-hydroxytetradecanoyl-[acyl-carrier-protein] and UDP-N-acetyl-alpha-D-glucosamine: step 1/6. Its function is as follows. Involved in the biosynthesis of lipid A, a phosphorylated glycolipid that anchors the lipopolysaccharide to the outer membrane of the cell. The chain is Acyl-[acyl-carrier-protein]--UDP-N-acetylglucosamine O-acyltransferase from Sulfurihydrogenibium sp. (strain YO3AOP1).